We begin with the raw amino-acid sequence, 265 residues long: Large ribosomal subunit protein bL9m (265 aa).

A mitochondrion-targeting transit peptide spans 1 to 49 (MAASVAPGVRTLWWAGAAWLRQGGIRELFRPRIEGSTPGRDFSLSHYQS).

The protein belongs to the bacterial ribosomal protein bL9 family. In terms of assembly, component of the mitochondrial ribosome large subunit (39S) which comprises a 16S rRNA and about 50 distinct proteins.

It localises to the mitochondrion. The protein is Large ribosomal subunit protein bL9m (Mrpl9) of Mus musculus (Mouse).